We begin with the raw amino-acid sequence, 209 residues long: Large ribosomal subunit protein bL25 (209 aa).

Positions 190–209 are disordered; that stretch reads GLKSADDEAEGEDAEEAAAE. Residues 196-209 show a composition bias toward acidic residues; that stretch reads DEAEGEDAEEAAAE.

The protein belongs to the bacterial ribosomal protein bL25 family. CTC subfamily. In terms of assembly, part of the 50S ribosomal subunit; part of the 5S rRNA/L5/L18/L25 subcomplex. Contacts the 5S rRNA. Binds to the 5S rRNA independently of L5 and L18.

Functionally, this is one of the proteins that binds to the 5S RNA in the ribosome where it forms part of the central protuberance. The protein is Large ribosomal subunit protein bL25 of Ruegeria sp. (strain TM1040) (Silicibacter sp.).